A 74-amino-acid polypeptide reads, in one-letter code: Small ribosomal subunit protein uS15 (74 aa).

It belongs to the universal ribosomal protein uS15 family. Part of the 30S ribosomal subunit. Forms a bridge to the 50S subunit in the 70S ribosome, contacting the 23S rRNA.

Functionally, one of the primary rRNA binding proteins, it binds directly to 16S rRNA where it helps nucleate assembly of the platform of the 30S subunit by binding and bridging several RNA helices of the 16S rRNA. Forms an intersubunit bridge (bridge B4) with the 23S rRNA of the 50S subunit in the ribosome. In Aster yellows witches'-broom phytoplasma (strain AYWB), this protein is Small ribosomal subunit protein uS15.